The chain runs to 231 residues: MATVSLPCTAVLIDLDGTLVDCAPDIVEAANRMLADLGSPALPFGTVAGFIGRGVPNLVRRVLETAQLAPRVDATDAVAMFHRHYADTNGRLGSVFPGVEAGLAALRRQGYRLACVTNKPRALAVPLLALTGLSQYLEVLVAGDSIAQMKPDPEPLRHACNLLDVDAAQGVLVGDSAVDVAAARAAGIPVCLVRYGYAGPGGPAALGADALVDSLEALPALLTPARLAPAA.

Catalysis depends on D14, which acts as the Nucleophile. The Mg(2+) site is built by D14, D16, and D175.

The protein belongs to the HAD-like hydrolase superfamily. CbbY/CbbZ/Gph/YieH family. In terms of assembly, homotrimer. Mg(2+) is required as a cofactor.

The enzyme catalyses 2-phosphoglycolate + H2O = glycolate + phosphate. Its pathway is organic acid metabolism; glycolate biosynthesis; glycolate from 2-phosphoglycolate: step 1/1. Functionally, specifically catalyzes the dephosphorylation of 2-phosphoglycolate. Is involved in the dissimilation of the intracellular 2-phosphoglycolate formed during the DNA repair of 3'-phosphoglycolate ends, a major class of DNA lesions induced by oxidative stress. In Cupriavidus necator (strain ATCC 17699 / DSM 428 / KCTC 22496 / NCIMB 10442 / H16 / Stanier 337) (Ralstonia eutropha), this protein is Phosphoglycolate phosphatase, plasmid (cbbZP).